The primary structure comprises 934 residues: Leucine--tRNA ligase 1 (934 aa).

A 'HIGH' region motif is present at residues 41–51; that stretch reads PYTNSPMHVGH. Positions 616-620 match the 'KMSKS' region motif; that stretch reads KMSKS. K619 contributes to the ATP binding site.

The protein belongs to the class-I aminoacyl-tRNA synthetase family.

It is found in the cytoplasm. It carries out the reaction tRNA(Leu) + L-leucine + ATP = L-leucyl-tRNA(Leu) + AMP + diphosphate. The chain is Leucine--tRNA ligase 1 from Saccharolobus solfataricus (strain ATCC 35092 / DSM 1617 / JCM 11322 / P2) (Sulfolobus solfataricus).